A 260-amino-acid polypeptide reads, in one-letter code: Methyl-coenzyme M reductase I subunit gamma (260 aa).

Position 123 (Arg123) interacts with coenzyme M.

Belongs to the methyl-coenzyme M reductase gamma subunit family. As to quaternary structure, MCR is a hexamer of two alpha, two beta, and two gamma chains, forming a dimer of heterotrimers. The cofactor is coenzyme F430.

The protein localises to the cytoplasm. The enzyme catalyses coenzyme B + methyl-coenzyme M = methane + coenzyme M-coenzyme B heterodisulfide. It participates in one-carbon metabolism; methyl-coenzyme M reduction; methane from methyl-coenzyme M: step 1/1. Component of the methyl-coenzyme M reductase (MCR) I that catalyzes the reductive cleavage of methyl-coenzyme M (CoM-S-CH3 or 2-(methylthio)ethanesulfonate) using coenzyme B (CoB or 7-mercaptoheptanoylthreonine phosphate) as reductant which results in the production of methane and the mixed heterodisulfide of CoB and CoM (CoM-S-S-CoB). This is the final step in methanogenesis. This is Methyl-coenzyme M reductase I subunit gamma (mcrG) from Methanocaldococcus jannaschii (strain ATCC 43067 / DSM 2661 / JAL-1 / JCM 10045 / NBRC 100440) (Methanococcus jannaschii).